The chain runs to 248 residues: Putative transposase YncI (248 aa).

This sequence belongs to the transposase 11 family.

The protein is Putative transposase YncI (yncI) of Escherichia coli (strain K12).